We begin with the raw amino-acid sequence, 486 residues long: MKVVFVSYEVFPFAKVGGLADVAGTLPKYLKKHGVDVTIVMPKHRIVEKNAEKFGYEIKKVAEGLSVSHVKTDQKFDIYESVLPGSDVKTYFVANDYYFSAEDVYAGPDLGEQAIFFCAATLDLVKHLDLKPDIVHVNDWQTALIPVYLKTVYRDDPYFSRTATVLTIHNLGYQGVFDPKYLSFAGLPDYVFTIDGLEFYRQLNFLKGGIVFSDVINTVSPTYAEEIQTEEYGEKLEGVLRMRSKDLYGILNGIDYELYNPATDRYIYVNYDVNRLELKWENKVKLQEELGLPVNKETAVAGLISRLVPQKGLDLLVDVMDYLMLFDLQIVVLGTGDEQYENAFRKFQERYPDKVSANIKFDVELAQKIYAGADIFLMPSRYEPCGLGQMFSMRYGTIPVVRYTGGLADTVKEYDPQSMEGTGFGFKKYDSAHLLKAVSKALHFYYREKDHWRRIMTNAMNTDLSWDRSAKEYVDLYKKALAKVGR.

Lys15 provides a ligand contact to ADP-alpha-D-glucose.

Belongs to the glycosyltransferase 1 family. Bacterial/plant glycogen synthase subfamily.

It carries out the reaction [(1-&gt;4)-alpha-D-glucosyl](n) + ADP-alpha-D-glucose = [(1-&gt;4)-alpha-D-glucosyl](n+1) + ADP + H(+). The protein operates within glycan biosynthesis; glycogen biosynthesis. Functionally, synthesizes alpha-1,4-glucan chains using ADP-glucose. The polypeptide is Glycogen synthase (Thermotoga petrophila (strain ATCC BAA-488 / DSM 13995 / JCM 10881 / RKU-1)).